Here is an 88-residue protein sequence, read N- to C-terminus: Small ribosomal subunit protein bS20 (88 aa).

A disordered region spans residues 1 to 27 (MANTASAKKMTRKIAKRTAINRSRRSR).

Belongs to the bacterial ribosomal protein bS20 family.

In terms of biological role, binds directly to 16S ribosomal RNA. The protein is Small ribosomal subunit protein bS20 of Methylobacterium radiotolerans (strain ATCC 27329 / DSM 1819 / JCM 2831 / NBRC 15690 / NCIMB 10815 / 0-1).